Reading from the N-terminus, the 152-residue chain is MSHVTLIGDRLASTGTEFVYEGESVACEGCPYRKQCLNLTEGVRYEITDVRDDGQLLDCAVHDTGVRAVEVEPTSVVANVATREAYAGGKAELPGSCPHTECPSHEYCVPDGAEFDTEYQIETVHGDPPHEHCQLDRELTLVEFKPPDTTSN.

This sequence belongs to the UPF0179 family.

This Haloquadratum walsbyi (strain DSM 16790 / HBSQ001) protein is UPF0179 protein HQ_3004A.